Consider the following 280-residue polypeptide: Energy-coupling factor transporter ATP-binding protein EcfA2 (280 aa).

Positions 3–245 (INLQNVSYTY…VSLLEKKQLG (243 aa)) constitute an ABC transporter domain. Position 40-47 (40-47 (GHTGSGKS)) interacts with ATP.

This sequence belongs to the ABC transporter superfamily. Energy-coupling factor EcfA family. In terms of assembly, forms a stable energy-coupling factor (ECF) transporter complex composed of 2 membrane-embedded substrate-binding proteins (S component), 2 ATP-binding proteins (A component) and 2 transmembrane proteins (T component).

The protein resides in the cell membrane. In terms of biological role, ATP-binding (A) component of a common energy-coupling factor (ECF) ABC-transporter complex. Unlike classic ABC transporters this ECF transporter provides the energy necessary to transport a number of different substrates. This Streptococcus pyogenes serotype M1 protein is Energy-coupling factor transporter ATP-binding protein EcfA2.